The chain runs to 309 residues: Probable pyridoxal 5'-phosphate synthase subunit PDX1 (309 aa).

Position 40 (Asp-40) interacts with D-ribose 5-phosphate. The Schiff-base intermediate with D-ribose 5-phosphate role is filled by Lys-97. Gly-169 lines the D-ribose 5-phosphate pocket. A D-glyceraldehyde 3-phosphate-binding site is contributed by Arg-181. D-ribose 5-phosphate is bound by residues Gly-230 and 251–252 (GS).

It belongs to the PdxS/SNZ family.

It catalyses the reaction aldehydo-D-ribose 5-phosphate + D-glyceraldehyde 3-phosphate + L-glutamine = pyridoxal 5'-phosphate + L-glutamate + phosphate + 3 H2O + H(+). Its pathway is cofactor biosynthesis; pyridoxal 5'-phosphate biosynthesis. In terms of biological role, catalyzes the formation of pyridoxal 5'-phosphate from ribose 5-phosphate (RBP), glyceraldehyde 3-phosphate (G3P) and ammonia. The ammonia is provided by PDX2. Can also use ribulose 5-phosphate and dihydroxyacetone phosphate as substrates, resulting from enzyme-catalyzed isomerization of RBP and G3P, respectively. Also plays an indirect role in resistance to singlet oxygen-generating photosensitizers. The polypeptide is Probable pyridoxal 5'-phosphate synthase subunit PDX1 (PDX1) (Hevea brasiliensis (Para rubber tree)).